The primary structure comprises 1843 residues: GTPase-activating protein CdGAPr (1843 aa).

The segment at Ala94–Met117 is disordered. 3 positions are modified to phosphoserine: Ser166, Ser168, and Ser180. Residues Pro295 to Asp363 enclose the SH3 domain. One can recognise a Rho-GAP domain in the interval Cys424–Phe618. A disordered region spans residues Pro746–Thr780. Residues Ser759–Gly771 show a composition bias toward polar residues. Residues Ser837 and Ser840 each carry the phosphoserine modification. Position 843 is a phosphothreonine (Thr843). Phosphoserine is present on residues Ser851, Ser861, Ser872, and Ser876. Disordered stretches follow at residues Glu894–Ser975 and Ala1013–Pro1106. Polar residues predominate over residues Phe928–Pro939. Ser1029 bears the Phosphoserine mark. A compositionally biased stretch (low complexity) spans Ser1029–Val1053. The span at Lys1058–Phe1069 shows a compositional bias: basic and acidic residues. The span at Tyr1071–Ala1097 shows a compositional bias: polar residues. Thr1118 and Thr1121 each carry phosphothreonine. A phosphoserine mark is found at Ser1125, Ser1216, Ser1281, and Ser1284. Residues Tyr1378–Glu1404 are a coiled coil. Phosphoserine is present on residues Ser1453 and Ser1456. Thr1679 carries the post-translational modification Phosphothreonine. 2 disordered regions span residues Thr1721–Gln1745 and Thr1779–Ile1829. Positions Thr1779 to Pro1790 are enriched in polar residues. Residues Lys1793–Gln1806 are compositionally biased toward basic and acidic residues. The segment covering Arg1807–Asn1818 has biased composition (polar residues).

As to expression, ubiquitously expressed.

Probably functions as a GTPase-activating protein (GAP) for RAC1 and/or CDC42. Required for optic stalk formation. This is GTPase-activating protein CdGAPr (CdGAPr) from Drosophila melanogaster (Fruit fly).